Consider the following 328-residue polypeptide: DNA-directed RNA polymerase subunit alpha (328 aa).

An alpha N-terminal domain (alpha-NTD) region spans residues Met-1–Glu-232. Residues Ile-248–Pro-328 are alpha C-terminal domain (alpha-CTD).

Belongs to the RNA polymerase alpha chain family. As to quaternary structure, homodimer. The RNAP catalytic core consists of 2 alpha, 1 beta, 1 beta' and 1 omega subunit. When a sigma factor is associated with the core the holoenzyme is formed, which can initiate transcription.

The catalysed reaction is RNA(n) + a ribonucleoside 5'-triphosphate = RNA(n+1) + diphosphate. DNA-dependent RNA polymerase catalyzes the transcription of DNA into RNA using the four ribonucleoside triphosphates as substrates. In Bordetella avium (strain 197N), this protein is DNA-directed RNA polymerase subunit alpha.